A 397-amino-acid polypeptide reads, in one-letter code: Proteinase-activated receptor 2 (397 aa).

The signal sequence occupies residues 1-25 (MRSPSAAWLLGAAILLAASLSCSGT). Positions 26–36 (IQGTNRSSKGR) are cleaved as a propeptide — removed for receptor activation. N30 carries N-linked (GlcNAc...) asparagine glycosylation. Residues 37-71 (SLIGKVDGTSHVTGKGVTVETVFSVDEFSASVLTG) are Extracellular-facing. Residues 72 to 101 (KLTTVFLPIVYTIVFVVGLPSNGMALWVFL) form a helical membrane-spanning segment. Residues 102 to 108 (FRTKKKH) lie on the Cytoplasmic side of the membrane. A helical membrane pass occupies residues 109–137 (PAVIYMANLALADLLSVIWFPLKIAYHIH). Residues 138 to 149 (GNNWIYGEALCN) lie on the Extracellular side of the membrane. C148 and C226 form a disulfide bridge. The chain crosses the membrane as a helical span at residues 150-177 (VLIGFFYGNMYCSILFMTCLSVQRYWVI). Topologically, residues 178–183 (VNPMGH) are cytoplasmic. The chain crosses the membrane as a helical span at residues 184–211 (SRKKANIAIGISLAIWLLILLVTIPLYV). Residues 212–235 (VKQTIFIPALNITTCHDVLPEQLL) lie on the Extracellular side of the membrane. N222 carries N-linked (GlcNAc...) asparagine glycosylation. The chain crosses the membrane as a helical span at residues 236–269 (VGDMFNYFLSLAIGVFLFPAFLTASAYVLMIRML). The Cytoplasmic segment spans residues 270–277 (RSSAMDEN). The chain crosses the membrane as a helical span at residues 278–317 (SEKKRKRAIKLIVTVLAMYLICFTPSNLLLVVHYFLIKSQ). The Extracellular portion of the chain corresponds to 318-323 (GQSHVY). Residues 324-347 (ALYIVALCLSTLNSCIDPFVYYFV) form a helical membrane-spanning segment. Over 348–397 (SHDFRDHAKNALLCRSVRTVKQMQVSLTSKKHSRKSSSYSSSSTTVKTSY) the chain is Cytoplasmic. C361 carries S-palmitoyl cysteine lipidation. The interval 373–397 (SLTSKKHSRKSSSYSSSSTTVKTSY) is disordered. Over residues 383–397 (SSSYSSSSTTVKTSY) the composition is skewed to low complexity.

Belongs to the G-protein coupled receptor 1 family. In terms of assembly, interacts with TLR4, COPS5 and TMED2. Interacts with GNAQ, GNA11, GNA12, GNA13 and GNA14. Post-translationally, a proteolytic cleavage generates a new N-terminus that functions as a tethered ligand. Activating serine proteases include trypsin, mast cell tryptase, coagulation factors VII and Xa, myeloblastin/PRTN3 and membrane-type serine protease 1/ST14. Subsequent cleavage by serine proteases, including neutrophil elastase and cathepsin G, leads to receptor deactivation. At least in part, implicated proteases are also shown to activate the receptor; the glycosylation status of the receptor is thought to contribute to the difference. In addition to conventional trypsin-like proteases activated by other proteases and glycosidases derived from bacteria, fungi and insects. Activated by serine protease allergens such as dust mite Der p3 and Der p9 and mold Pen c13. Activated by P.gingivalis arginine-specific (trypsin-like) cysteine proteinases called gingipains. Activated by S.griseus exogenous chitinase. Activated by A.alternata aspartate protease; the cleavage generates non-conventional processed forms. Proteolytically cleaved by coagulation factor Xa (F10); cleavage results in activation of F2RL1-dependent signaling. N-glycosylated and sialylated. In terms of processing, multiple phosphorylated on serine and threonine residues in the cytoplasmic region upon receptor activation; required for receptor desensitization and recruitment of beta-arrestin. Post-translationally, monoubiquitinated by CBL at the plasma membrane and in early endosomes; not required for receptor endocytosis but for translocation to late endosomes or lysosomes. Deubiquitination involves STAMBP and USP8; required for lysosomal trafficking and receptor degradation. Widely expressed in tissues with especially high levels in pancreas, liver, kidney, small intestine, and colon. Moderate expression is detected in many organs, but none in brain or skeletal muscle. Expressed in endothelial cells.

The protein localises to the cell membrane. Activated upon interaction by mucunain, a cowhage (Mucuna pruriens) plant cysteine proteinase. Functionally, receptor for trypsin and trypsin-like enzymes coupled to G proteins. Its function is mediated through the activation of several signaling pathways including phospholipase C (PLC), intracellular calcium, mitogen-activated protein kinase (MAPK), I-kappaB kinase/NF-kappaB and Rho. Can also be transactivated by cleaved F2R/PAR1. Involved in modulation of inflammatory responses and regulation of innate and adaptive immunity, and acts as a sensor for proteolytic enzymes generated during infection. Generally is promoting inflammation. Can signal synergistically with TLR4 and probably TLR2 in inflammatory responses and modulates TLR3 signaling. Has a protective role in establishing the endothelial barrier; the activity involves coagulation factor X. Regulates endothelial cell barrier integrity during neutrophil extravasation, probably following proteolytic cleavage by PRTN3. Proposed to have a bronchoprotective role in airway epithelium, but also shown to compromise the airway epithelial barrier by interrupting E-cadherin adhesion. Involved in the regulation of vascular tone; activation results in hypotension presumably mediated by vasodilation. Associates with a subset of G proteins alpha subunits such as GNAQ, GNA11, GNA14, GNA12 and GNA13, but probably not with G(o)-alpha, G(i) subunit alpha-1 and G(i) subunit alpha-2. However, according to PubMed:21627585 can signal through G(i) subunit alpha. Believed to be a class B receptor which internalizes as a complex with arrestin and traffic with it to endosomal vesicles, presumably as desensitized receptor, for extended periods of time. Mediates inhibition of TNF-alpha stimulated JNK phosphorylation via coupling to GNAQ and GNA11; the function involves dissociation of RIPK1 and TRADD from TNFR1. Mediates phosphorylation of nuclear factor NF-kappa-B RELA subunit at 'Ser-536'; the function involves IKBKB and is predominantly independent of G proteins. Involved in cellular migration. Involved in cytoskeletal rearrangement and chemotaxis through beta-arrestin-promoted scaffolds; the function is independent of GNAQ and GNA11 and involves promotion of cofilin dephosphorylation and actin filament severing. Induces redistribution of COPS5 from the plasma membrane to the cytosol and activation of the JNK cascade is mediated by COPS5. Involved in the recruitment of leukocytes to the sites of inflammation and is the major PAR receptor capable of modulating eosinophil function such as pro-inflammatory cytokine secretion, superoxide production and degranulation. During inflammation promotes dendritic cell maturation, trafficking to the lymph nodes and subsequent T-cell activation. Involved in antimicrobial response of innate immune cells; activation enhances phagocytosis of Gram-positive and killing of Gram-negative bacteria. Acts synergistically with interferon-gamma in enhancing antiviral responses. Implicated in a number of acute and chronic inflammatory diseases such as of the joints, lungs, brain, gastrointestinal tract, periodontium, skin, and vascular systems, and in autoimmune disorders. Probably mediates activation of pro-inflammatory and pro-fibrotic responses in fibroblasts, triggered by coagulation factor Xa (F10). Mediates activation of barrier protective signaling responses in endothelial cells, triggered by coagulation factor Xa (F10). The polypeptide is Proteinase-activated receptor 2 (F2RL1) (Homo sapiens (Human)).